A 272-amino-acid chain; its full sequence is Hydroxyethylthiazole kinase (272 aa).

A substrate-binding site is contributed by Met-44. 2 residues coordinate ATP: Lys-119 and Thr-172. Gly-199 lines the substrate pocket.

This sequence belongs to the Thz kinase family. It depends on Mg(2+) as a cofactor.

It carries out the reaction 5-(2-hydroxyethyl)-4-methylthiazole + ATP = 4-methyl-5-(2-phosphooxyethyl)-thiazole + ADP + H(+). Its pathway is cofactor biosynthesis; thiamine diphosphate biosynthesis; 4-methyl-5-(2-phosphoethyl)-thiazole from 5-(2-hydroxyethyl)-4-methylthiazole: step 1/1. In terms of biological role, catalyzes the phosphorylation of the hydroxyl group of 4-methyl-5-beta-hydroxyethylthiazole (THZ). The sequence is that of Hydroxyethylthiazole kinase from Enterococcus faecalis (strain ATCC 700802 / V583).